A 231-amino-acid polypeptide reads, in one-letter code: Large ribosomal subunit protein uL3 (231 aa).

Q151 carries the N5-methylglutamine modification.

Belongs to the universal ribosomal protein uL3 family. In terms of assembly, part of the 50S ribosomal subunit. Forms a cluster with proteins L14 and L19. Methylated by PrmB.

One of the primary rRNA binding proteins, it binds directly near the 3'-end of the 23S rRNA, where it nucleates assembly of the 50S subunit. This is Large ribosomal subunit protein uL3 from Granulibacter bethesdensis (strain ATCC BAA-1260 / CGDNIH1).